Here is a 360-residue protein sequence, read N- to C-terminus: Aminomethyltransferase (360 aa).

This sequence belongs to the GcvT family. As to quaternary structure, the glycine cleavage system is composed of four proteins: P, T, L and H.

It carries out the reaction N(6)-[(R)-S(8)-aminomethyldihydrolipoyl]-L-lysyl-[protein] + (6S)-5,6,7,8-tetrahydrofolate = N(6)-[(R)-dihydrolipoyl]-L-lysyl-[protein] + (6R)-5,10-methylene-5,6,7,8-tetrahydrofolate + NH4(+). In terms of biological role, the glycine cleavage system catalyzes the degradation of glycine. This Legionella pneumophila subsp. pneumophila (strain Philadelphia 1 / ATCC 33152 / DSM 7513) protein is Aminomethyltransferase.